The primary structure comprises 234 residues: Transcriptional regulatory protein WalR (234 aa).

The Response regulatory domain occupies 3 to 116 (KILIVDDEKP…ELQARVKALL (114 aa)). At D52 the chain carries 4-aspartylphosphate. Positions 133–232 (PQPIQIGDLE…RRGVGYYMRN (100 aa)) form a DNA-binding region, ompR/PhoB-type.

In terms of assembly, monomer. Homodimer. In terms of processing, phosphorylated by WalK; can also be dephosphorylated by WalK.

The protein localises to the cytoplasm. In terms of biological role, member of the two-component regulatory system WalK/WalR that regulates genes involved in cell wall metabolism. Binds to the promoter region of the transcription factor fabT gene in the fabTH-acp operon in vitro. Inhibits transcription of fabT, probably acting in an unphosphorylated form, thereby playing a role in the regulation of fatty acid biosynthesis. Essential for normal growth in vitro. Required for maintaining normal cellular morphology, acting, at least in part, by regulating peptidoglycan hydrolase pcsB. Involved in maintaining expression of WalRK regulon genes in exponentially growing cells. This is Transcriptional regulatory protein WalR from Streptococcus pneumoniae serotype 2 (strain D39 / NCTC 7466).